The sequence spans 328 residues: Neuropeptides B/W receptor type 1 (328 aa).

The Extracellular segment spans residues 1–37 (MDNASFSEPWPANASGPDPALSCSNASTLAPLPAPLA). 3 N-linked (GlcNAc...) asparagine glycosylation sites follow: N3, N13, and N25. Residues 38-61 (VAVPVVYAVICAVGLAGNSAVLYV) traverse the membrane as a helical segment. The Cytoplasmic portion of the chain corresponds to 62–72 (LLRAPRMKTVT). Residues 73-97 (NLFILNLAIADELFTLVLPINIADF) traverse the membrane as a helical segment. At 98–112 (LLRQWPFGELMCKLI) the chain is on the extracellular side. A disulfide bridge links C109 with C188. A helical transmembrane segment spans residues 113–132 (VAIDQYNTFSSLYFLTVMSA). Over 133-157 (DRYLVVLATAESRRVAGRTYSAARA) the chain is Cytoplasmic. The chain crosses the membrane as a helical span at residues 158–177 (VSLAVWGIVTLVVLPFAVFA). Over 178 to 202 (RLDDEQGRRQCVLVFPQPEAFWWRA) the chain is Extracellular. The helical transmembrane segment at 203–224 (SRLYTLVLGFAIPVSTICVLYT) threads the bilayer. The Cytoplasmic portion of the chain corresponds to 225-248 (TLLCRLHAMRLDSHAKALERAKKR). Residues 249–273 (VTFLVVAILAVCLLCWTPYHLSTVV) form a helical membrane-spanning segment. Over 274–283 (ALTTDLPQTP) the chain is Extracellular. A helical transmembrane segment spans residues 284 to 298 (LVIAISYFITSLSYA). Topologically, residues 299 to 328 (NSCLNPFLYAFLDASFRRNLRQLITCRAAA) are cytoplasmic.

This sequence belongs to the G-protein coupled receptor 1 family. In terms of tissue distribution, found in cerebellum and frontal cortex. Detected at high levels in hippocampus, amygdala and trachea; at moderate levels in fetal brain, pituitary gland and prostate. Not in caudate, accumbens, kidney or liver. Also detected at high levels in lung carcinoma.

The protein resides in the cell membrane. Its function is as follows. Interacts specifically with a number of opioid ligands. Receptor for neuropeptides B and W, which may be involved in neuroendocrine system regulation, food intake and the organization of other signals. Has a higher affinity for neuropeptide B. In Homo sapiens (Human), this protein is Neuropeptides B/W receptor type 1 (NPBWR1).